The following is a 108-amino-acid chain: Nucleoid-associated protein ACP_0492 (108 aa).

It belongs to the YbaB/EbfC family. As to quaternary structure, homodimer.

It localises to the cytoplasm. The protein resides in the nucleoid. Its function is as follows. Binds to DNA and alters its conformation. May be involved in regulation of gene expression, nucleoid organization and DNA protection. The sequence is that of Nucleoid-associated protein ACP_0492 from Acidobacterium capsulatum (strain ATCC 51196 / DSM 11244 / BCRC 80197 / JCM 7670 / NBRC 15755 / NCIMB 13165 / 161).